We begin with the raw amino-acid sequence, 347 residues long: Indole-3-glycerol phosphate lyase, chloroplastic (347 aa).

Disordered stretches follow at residues 1-38 and 64-89; these read MAFA…TPRR and APPQ…RSRP. Residues 1 to 53 constitute a chloroplast transit peptide; sequence MAFAPKTSSSSSLSSALQAAQSPPLLLRRMSSTATPRRRYDAAVVVTTTTTAR. The segment covering 8–27 has biased composition (low complexity); sequence SSSSSLSSALQAAQSPPLLL. A compositionally biased stretch (pro residues) spans 64-76; it reads APPQAPAPAPVPP.

Belongs to the TrpA family. In terms of assembly, tetramer of two alpha and two beta chains for the tryptophan synthase activity. Homodimer of alpha chains for the indole-3-glycerol phosphate lyase activity.

Its subcellular location is the plastid. The protein localises to the chloroplast. The enzyme catalyses (1S,2R)-1-C-(indol-3-yl)glycerol 3-phosphate = indole + D-glyceraldehyde 3-phosphate. The catalysed reaction is (1S,2R)-1-C-(indol-3-yl)glycerol 3-phosphate + L-serine = D-glyceraldehyde 3-phosphate + L-tryptophan + H2O. The protein operates within secondary metabolite biosynthesis; 2,4-dihydroxy-1,4-benzoxazin-3-one biosynthesis; 2,4-dihydroxy-1,4-benzoxazin-3-one from indoleglycerol phosphate: step 1/5. It functions in the pathway amino-acid biosynthesis; L-tryptophan biosynthesis; L-tryptophan from chorismate: step 5/5. In terms of biological role, the alpha subunit is responsible for the aldol cleavage of indoleglycerol phosphate to indole and glyceraldehyde 3-phosphate. In bacteria, tryptophan synthase alpha (TSA) activity is almost completely dependent on formation of an active alpha2beta2 complex with tryptophan synthase beta (TSB), and indole is usually not released during tryptophan synthesis. In maize, the TSA homolog BX1 catalyzes the formation of free indole from indole-3-glycerol phosphate, independently of TSB. The sequence is that of Indole-3-glycerol phosphate lyase, chloroplastic (BX1) from Zea mays (Maize).